The sequence spans 861 residues: Probable beta-glucosidase A (861 aa).

The signal sequence occupies residues 1–19; that stretch reads MKLGWIEVAALAAASVVSA. N-linked (GlcNAc...) asparagine glycosylation is found at Asn62, Asn212, and Asn253. The active site involves Asp281. Asn316, Asn323, Asn355, Asn443, Asn524, Asn543, Asn565, Asn669, and Asn713 each carry an N-linked (GlcNAc...) asparagine glycan. The tract at residues 730–754 is disordered; it reads DSKYIPEGATDGSAQPRLPASGGAG. Residue Asn846 is glycosylated (N-linked (GlcNAc...) asparagine).

It belongs to the glycosyl hydrolase 3 family.

The protein localises to the secreted. It carries out the reaction Hydrolysis of terminal, non-reducing beta-D-glucosyl residues with release of beta-D-glucose.. The protein operates within glycan metabolism; cellulose degradation. Its function is as follows. Beta-glucosidases are one of a number of cellulolytic enzymes involved in the degradation of cellulosic biomass. Catalyzes the last step releasing glucose from the inhibitory cellobiose. This chain is Probable beta-glucosidase A (bglA), found in Aspergillus oryzae (strain ATCC 42149 / RIB 40) (Yellow koji mold).